Consider the following 327-residue polypeptide: Methionyl-tRNA formyltransferase (327 aa).

121–124 (SLLP) is a binding site for (6S)-5,6,7,8-tetrahydrofolate.

The protein belongs to the Fmt family.

The catalysed reaction is L-methionyl-tRNA(fMet) + (6R)-10-formyltetrahydrofolate = N-formyl-L-methionyl-tRNA(fMet) + (6S)-5,6,7,8-tetrahydrofolate + H(+). In terms of biological role, attaches a formyl group to the free amino group of methionyl-tRNA(fMet). The formyl group appears to play a dual role in the initiator identity of N-formylmethionyl-tRNA by promoting its recognition by IF2 and preventing the misappropriation of this tRNA by the elongation apparatus. The sequence is that of Methionyl-tRNA formyltransferase from Burkholderia vietnamiensis (strain G4 / LMG 22486) (Burkholderia cepacia (strain R1808)).